Consider the following 103-residue polypeptide: MASNKLRIYLKAYDHTLLDESAKRIAESAKKSGAIVAGPMPLPTKIRKYTVLRSVHVNKDSREQFEMRVHRRMIELVNSTDKAISSLTSVHLPAGVGIEIKQV.

The protein belongs to the universal ribosomal protein uS10 family. In terms of assembly, part of the 30S ribosomal subunit.

Involved in the binding of tRNA to the ribosomes. This chain is Small ribosomal subunit protein uS10, found in Fusobacterium nucleatum subsp. nucleatum (strain ATCC 25586 / DSM 15643 / BCRC 10681 / CIP 101130 / JCM 8532 / KCTC 2640 / LMG 13131 / VPI 4355).